The sequence spans 141 residues: uncharacterized protein (141 aa).

Residues 1–39 are compositionally biased toward low complexity; it reads MNNNNNNNNNNNNNNNNNNNNNNNNNSYDSNHSSSSYTS. The disordered stretch occupies residues 1–48; the sequence is MNNNNNNNNNNNNNNNNNNNNNNNNNSYDSNHSSSSYTSENQNREQQF. A helical transmembrane segment spans residues 109–129; sequence FFCKIILVFICLVAIYSLVVI.

It is found in the membrane. This is an uncharacterized protein from Dictyostelium discoideum (Social amoeba).